The primary structure comprises 191 residues: ATP-dependent dethiobiotin synthetase BioD 2 (191 aa).

13–18 provides a ligand contact to ATP; that stretch reads DVGKTI. Position 17 (Thr17) interacts with Mg(2+). Lys38 is an active-site residue. Residue Thr42 coordinates substrate. Residues Asp50 and 115-118 each bind ATP; that span reads EGAG. Mg(2+) contacts are provided by Asp50 and Glu115.

It belongs to the dethiobiotin synthetase family. As to quaternary structure, homodimer. It depends on Mg(2+) as a cofactor.

Its subcellular location is the cytoplasm. The enzyme catalyses (7R,8S)-7,8-diammoniononanoate + CO2 + ATP = (4R,5S)-dethiobiotin + ADP + phosphate + 3 H(+). It functions in the pathway cofactor biosynthesis; biotin biosynthesis; biotin from 7,8-diaminononanoate: step 1/2. Functionally, catalyzes a mechanistically unusual reaction, the ATP-dependent insertion of CO2 between the N7 and N8 nitrogen atoms of 7,8-diaminopelargonic acid (DAPA, also called 7,8-diammoniononanoate) to form a ureido ring. The chain is ATP-dependent dethiobiotin synthetase BioD 2 from Haemophilus influenzae (strain ATCC 51907 / DSM 11121 / KW20 / Rd).